We begin with the raw amino-acid sequence, 201 residues long: Small ribosomal subunit protein eS1 (201 aa).

It belongs to the eukaryotic ribosomal protein eS1 family.

This Methanoregula boonei (strain DSM 21154 / JCM 14090 / 6A8) protein is Small ribosomal subunit protein eS1.